We begin with the raw amino-acid sequence, 253 residues long: ER membrane protein complex subunit 3 (253 aa).

A run of 3 helical transmembrane segments spans residues 10 to 30 (WVLLPISIVMVLTGVLKQYIM), 126 to 146 (FIPQTIIMWWVNHFFAGFILM), and 176 to 196 (SISWYFISVLGLNPVYNLIGL).

The protein belongs to the EMC3 family. As to quaternary structure, component of the ER membrane protein complex (EMC), which is composed of EMC1, EMC2, EMC3, EMC4, EMC5 and EMC6.

The protein resides in the endoplasmic reticulum membrane. The EMC seems to be required for efficient folding of proteins in the endoplasmic reticulum (ER). This is ER membrane protein complex subunit 3 (AIM27) from Saccharomyces cerevisiae (strain YJM789) (Baker's yeast).